A 198-amino-acid polypeptide reads, in one-letter code: Nudix hydrolase 21, chloroplastic (198 aa).

Residues 1–37 (MISLFISNFSNLSNLSPTFDNMNMNIPSKKIVPVPTP) constitute a chloroplast transit peptide. Residues 59–191 (GYRQVVGCVP…WMREALEAFI (133 aa)) form the Nudix hydrolase domain. A Nudix box motif is present at residues 98–119 (GGWEIDESIEEAALRETIEEAG). Mg(2+)-binding residues include Glu113 and Glu117.

This sequence belongs to the Nudix hydrolase family. It depends on Mg(2+) as a cofactor. Mn(2+) serves as cofactor. In terms of tissue distribution, expressed in roots, leaves, stems and inflorescences.

The protein resides in the plastid. The protein localises to the chloroplast. Probably mediates the hydrolysis of some nucleoside diphosphate derivatives. The chain is Nudix hydrolase 21, chloroplastic (NUDT21) from Arabidopsis thaliana (Mouse-ear cress).